An 810-amino-acid chain; its full sequence is MAAYLNRTISMVTGQTGPADDDRHASSTDTVDKSGPGSPLSRFNSSLQQSGSTMAANLLPESRLYQSNDKSPLQIFVRAKKKINDIYGEIEEYVHETTTFINALHAEAEIVDKAERELFESYVYKVAAIREVLQRDHMKVAFFGRTSNGKSSVINAMLREKILPSGIGHTTNCFCQVEGSNGGEAYLMTEGSEEKLNVVNIKQLANALCQEKLCESSLVRIFWPRERCSLLRDDVVFVDSPGVDVSANLDDWIDNHCLNADVFVLVLNAESTMTRAEKQFFHTVSQKLSKPNIFILNNRWDASANEPECQESVKSQHTERCIDFLTKELKVSNEKEAAERVFFVSARETLQARIEEAKGNPPHMGAIAEGFQIRYFEFQDFERKFEECISQSAVKTKFQQHSSRGKSVSGDMKSMLDNIYERITIFRNLKQDQKNLLTERIQGTETQMMQVTREMKMKIHNMVEEVEEKVSKALNEEIWRLGVLIDEFNMPFHPERLVLNIYKKELNAHVESGLGSNLRARLSMALAMNVESAQTEMTDRMHALVPNEQLLATSTKMVVRTQPFEMLYSLNCQNLCADFQEDLEFKFSWGIAAMIQRFTGKVRERSKKGQPALVNRQSSIGHSVSTPTTTPVEATPVCLLPAPVVAGITPEQLSLISRFAVSSIGSQGTVGGLVVAGVMLKTIGWRVLVGVGALYGCIYLYERLSWTNSAKERTFKSQYVRHATKKLKMIVDLTSANCSHQVQQELSSTFARLCRTVDTATTDMNDELKTLDSQLNILEANQKQLKLLRNKANYIQNELDIFEHNYISPQ.

The Cytoplasmic segment spans residues 1–637 (MAAYLNRTIS…TTTPVEATPV (637 aa)). Position 8 is a phosphothreonine (Thr8). The interval 13–40 (TGQTGPADDDRHASSTDTVDKSGPGSPL) is disordered. The span at 20–32 (DDDRHASSTDTVD) shows a compositional bias: basic and acidic residues. Ser38 is subject to Phosphoserine. Residues 134 to 382 (QRDHMKVAFF…IRYFEFQDFE (249 aa)) form the Dynamin-type G domain. The tract at residues 144–151 (GRTSNGKS) is G1 motif. 147-152 (SNGKSS) lines the GTP pocket. The tract at residues 170-171 (TT) is G2 motif. Positions 239–242 (DSPG) are G3 motif. 298–301 (NRWD) lines the GTP pocket. Residues 298-301 (NRWD) form a G4 motif region. Position 327 (Lys327) is a region of interest, G5 motif. Ser345 lines the GTP pocket. Residues 427–476 (RNLKQDQKNLLTERIQGTETQMMQVTREMKMKIHNMVEEVEEKVSKALNE) adopt a coiled-coil conformation. Thr553 bears the Phosphothreonine mark. The residue at position 554 (Ser554) is a Phosphoserine. Position 555 is a phosphothreonine (Thr555). The segment at 609-630 (GQPALVNRQSSIGHSVSTPTTT) is disordered. Residues 638–648 (CLLPAPVVAGI) traverse the membrane as a helical segment. Topologically, residues 649 to 668 (TPEQLSLISRFAVSSIGSQG) are mitochondrial intermembrane. A helical transmembrane segment spans residues 669–689 (TVGGLVVAGVMLKTIGWRVLV). Residues 690-810 (GVGALYGCIY…IFEHNYISPQ (121 aa)) lie on the Cytoplasmic side of the membrane. The stretch at 759–806 (TATTDMNDELKTLDSQLNILEANQKQLKLLRNKANYIQNELDIFEHNY) forms a coiled coil.

The protein belongs to the TRAFAC class dynamin-like GTPase superfamily. Dynamin/Fzo/YdjA family. Mitofusin subfamily. As to quaternary structure, interacts with Mul1. In terms of processing, ubiquitinated by park and Mul1. Ubiquitinated, probably by HUWE1, when dietary stearate (C18:0) levels are low; ubiquitination inhibits mitochondrial fusion. As to expression, widely expressed in embryos, accumulating in the mesoderm and endoderm during gut development. In the male germ line, it is expressed in spermatogonia, spermatocytes and early spermatids.

The protein localises to the mitochondrion outer membrane. It catalyses the reaction GTP + H2O = GDP + phosphate + H(+). Mitochondrial outer membrane GTPase that mediates mitochondrial clustering and fusion. Mitochondrial fusion is the physical merging of mitochondria that gives rise to mitochondrial networks, and this process is counterbalanced by mitochondrial fission which fragments networks. Promotes, but is not required for park recruitment to dysfunctional mitochondria. The protein is Transmembrane GTPase Marf (Marf) of Drosophila melanogaster (Fruit fly).